We begin with the raw amino-acid sequence, 684 residues long: ATP-dependent DNA helicase RecG (684 aa).

Residues 51–148 (RHIASMATLQ…ADVPQFQAPH (98 aa)) form a wedge domain region. The Helicase ATP-binding domain maps to 278-439 (DLARHRPMRR…VHADLEVSVI (162 aa)). 291–298 (GDVGSGKT) is a binding site for ATP. Residues 392–395 (DEQH) carry the DEAH box motif.

It belongs to the helicase family. RecG subfamily. In terms of assembly, monomer.

The enzyme catalyses Couples ATP hydrolysis with the unwinding of duplex DNA by translocating in the 3'-5' direction.. It catalyses the reaction ATP + H2O = ADP + phosphate + H(+). In terms of biological role, plays a critical role in recombination and DNA repair. Helps process Holliday junction intermediates to mature products by catalyzing branch migration. Has replication fork regression activity, unwinds stalled or blocked replication forks to make a HJ that can be resolved. Has a DNA unwinding activity characteristic of a DNA helicase with 3'-5' polarity. The chain is ATP-dependent DNA helicase RecG from Acidithiobacillus ferridurans.